The chain runs to 159 residues: UPF0336 protein MAP_4107 (159 aa).

This sequence belongs to the UPF0336 family.

This is UPF0336 protein MAP_4107 from Mycolicibacterium paratuberculosis (strain ATCC BAA-968 / K-10) (Mycobacterium paratuberculosis).